Consider the following 495-residue polypeptide: MSLRIYNTLSGKVEEFVPINPPKVLIYTCGVTVYDDSHVGHGRSLIVFDVFRRFLEHLGYQVKFVRNFTDVDDKIINRAKQECTDFMTIADRYIARYYVDMENIRVRPADVEPRVTEHIPEIIEVIQKLVEKGYAYVVEGDVYFSVKKFKDYGKLSKRDIEELIAGARVEPSEKKRDPLDFALWKASKAGEPAWDSPWGKGRPGWHTECVAMVFKHLGETIDIHGGGLDLVFPHHENEIAQAEAITGKPFARYWMHNGLVTVGGQKMSKSLGNYVTLREVYTKYHPDVLRLLVLFTHYRSPLDFSWEKMEETLKAYERLKNAIEDLELLKKLQVVESKEGGTHPLYEQVKEFEENFYASLSDDFNTPEALSHVYKLVGELNKVKNKAYSEGKITDRELSAYEFASKSLLNTMKKIFGLLEDLYPECKVERVVERELEAGQVFDEKLIQILIEARNIARKEKVFKVADYIRDKLKELGIVLEDTPAGTKWKKREGA.

Cysteine 29 contributes to the Zn(2+) binding site. The 'HIGH' region motif lies at 31–41; sequence VTVYDDSHVGH. Residues cysteine 209, histidine 234, and glutamate 238 each contribute to the Zn(2+) site. The 'KMSKS' region signature appears at 266–270; the sequence is KMSKS. Lysine 269 provides a ligand contact to ATP.

The protein belongs to the class-I aminoacyl-tRNA synthetase family. As to quaternary structure, monomer. Zn(2+) serves as cofactor.

It localises to the cytoplasm. The enzyme catalyses tRNA(Cys) + L-cysteine + ATP = L-cysteinyl-tRNA(Cys) + AMP + diphosphate. The sequence is that of Cysteine--tRNA ligase (cysS) from Aquifex aeolicus (strain VF5).